Reading from the N-terminus, the 71-residue chain is Small ribosomal subunit protein eS31 (71 aa).

The Zn(2+) site is built by cysteine 35, cysteine 38, cysteine 53, and cysteine 56. A C4-type zinc finger spans residues cysteine 35 to cysteine 56.

This sequence belongs to the eukaryotic ribosomal protein eS31 family. In terms of assembly, part of the 30S ribosomal subunit. The cofactor is Zn(2+).

The sequence is that of Small ribosomal subunit protein eS31 from Methanococcus vannielii (strain ATCC 35089 / DSM 1224 / JCM 13029 / OCM 148 / SB).